Reading from the N-terminus, the 70-residue chain is UPF0337 protein BC_3635 (70 aa).

The protein belongs to the UPF0337 (CsbD) family.

In Bacillus cereus (strain ATCC 14579 / DSM 31 / CCUG 7414 / JCM 2152 / NBRC 15305 / NCIMB 9373 / NCTC 2599 / NRRL B-3711), this protein is UPF0337 protein BC_3635.